The chain runs to 506 residues: Lysine--tRNA ligase (506 aa).

Mg(2+) contacts are provided by E416 and E423.

It belongs to the class-II aminoacyl-tRNA synthetase family. Homodimer. Mg(2+) is required as a cofactor.

The protein localises to the cytoplasm. The catalysed reaction is tRNA(Lys) + L-lysine + ATP = L-lysyl-tRNA(Lys) + AMP + diphosphate. The protein is Lysine--tRNA ligase of Bordetella parapertussis (strain 12822 / ATCC BAA-587 / NCTC 13253).